Here is a 771-residue protein sequence, read N- to C-terminus: Dol-P-Glc:Glc(2)Man(9)GlcNAc(2)-PP-Dol alpha-1,2-glucosyltransferase (771 aa).

The next 7 helical transmembrane spans lie at 45-65 (FITASGFILIYFFARSWLALV), 160-180 (VSFYAYHTAINIALFPVIFFF), 182-202 (GLYYTDVASTLVMLVAYWNHL), 221-241 (VVLGVAALFMRQTNVFWVVVY), 293-313 (VDMAWPDDWALCLLSIGIAAL), 326-346 (HITIMGLFAGFVAWNGGVVLG), and 357-377 (LPQMLYIWPFFAFFSAPLLIP). Positions 392 to 449 (TPTPSHTTTKDPGRSSWRFTKPSITSKKSSTTKPPQRSGPTPASSSSSSSSFSPDTNS) are disordered. Composition is skewed to low complexity over residues 411–426 (TKPSITSKKSSTTKPP) and 435–449 (SSSSSSSSFSPDTNS). The N-linked (GlcNAc...) asparagine glycan is linked to Asn448. The next 2 helical transmembrane spans lie at 469 to 489 (PFYLLATILLSAAIIHYNTII) and 503 to 525 (YIFRYTILRSSLVRLALVAAYTL). The segment covering 584–593 (QKNIKDKQKE) has biased composition (basic and acidic residues). The segment at 584 to 605 (QKNIKDKQKEVEEEEEEEEKED) is disordered. Positions 594–604 (VEEEEEEEEKE) are enriched in acidic residues. A run of 2 helical transmembrane segments spans residues 631–651 (TSTVLLWLLTTTLSLVTAPLV) and 656–676 (FILPWVFYRLLVPAMPVSSSL). The disordered stretch occupies residues 682-708 (SSSFASSTTESGNGDGNDAATAARQQQ). Residues 728–748 (LALETVWFLAINIGTMYMFLF) form a helical membrane-spanning segment.

Belongs to the ALG10 glucosyltransferase family.

It is found in the endoplasmic reticulum membrane. It carries out the reaction an alpha-D-Glc-(1-&gt;3)-alpha-D-Glc-(1-&gt;3)-alpha-D-Man-(1-&gt;2)-alpha-D-Man-(1-&gt;2)-alpha-D-Man-(1-&gt;3)-[alpha-D-Man-(1-&gt;2)-alpha-D-Man-(1-&gt;3)-[alpha-D-Man-(1-&gt;2)-alpha-D-Man-(1-&gt;6)]-alpha-D-Man-(1-&gt;6)]-beta-D-Man-(1-&gt;4)-beta-D-GlcNAc-(1-&gt;4)-alpha-D-GlcNAc-diphospho-di-trans,poly-cis-dolichol + a di-trans,poly-cis-dolichyl beta-D-glucosyl phosphate = a alpha-D-Glc-(1-&gt;2)-alpha-D-Glc-(1-&gt;3)-alpha-D-Glc-(1-&gt;3)-alpha-D-Man-(1-&gt;2)-alpha-D-Man-(1-&gt;2)-alpha-D-Man-(1-&gt;3)-[alpha-D-Man-(1-&gt;2)-alpha-D-Man-(1-&gt;3)-[alpha-D-Man-(1-&gt;2)-alpha-D-Man-(1-&gt;6)]-alpha-D-Man-(1-&gt;6)]-beta-D-Man-(1-&gt;4)-beta-D-GlcNAc-(1-&gt;4)-alpha-D-GlcNAc-diphospho-di-trans,poly-cis-dolichol + a di-trans,poly-cis-dolichyl phosphate + H(+). The protein operates within protein modification; protein glycosylation. Its function is as follows. Dol-P-Glc:Glc(2)Man(9)GlcNAc(2)-PP-Dol alpha-1,2-glucosyltransferase that operates in the biosynthetic pathway of dolichol-linked oligosaccharides, the glycan precursors employed in protein asparagine (N)-glycosylation. The assembly of dolichol-linked oligosaccharides begins on the cytosolic side of the endoplasmic reticulum membrane and finishes in its lumen. The sequential addition of sugars to dolichol pyrophosphate produces dolichol-linked oligosaccharides containing fourteen sugars, including two GlcNAcs, nine mannoses and three glucoses. Once assembled, the oligosaccharide is transferred from the lipid to nascent proteins by oligosaccharyltransferases. In the lumen of the endoplasmic reticulum, adds the third and last glucose residue from dolichyl phosphate glucose (Dol-P-Glc) onto the lipid-linked oligosaccharide intermediate Glc(2)Man(9)GlcNAc(2)-PP-Dol to produce Glc(3)Man(9)GlcNAc(2)-PP-Dol. This chain is Dol-P-Glc:Glc(2)Man(9)GlcNAc(2)-PP-Dol alpha-1,2-glucosyltransferase (alg-10), found in Neurospora crassa (strain ATCC 24698 / 74-OR23-1A / CBS 708.71 / DSM 1257 / FGSC 987).